Consider the following 169-residue polypeptide: Peptide deformylase (169 aa).

Fe cation is bound by residues Cys91 and His133. Glu134 is an active-site residue. Residue His137 coordinates Fe cation.

The protein belongs to the polypeptide deformylase family. Fe(2+) is required as a cofactor.

It catalyses the reaction N-terminal N-formyl-L-methionyl-[peptide] + H2O = N-terminal L-methionyl-[peptide] + formate. Its function is as follows. Removes the formyl group from the N-terminal Met of newly synthesized proteins. Requires at least a dipeptide for an efficient rate of reaction. N-terminal L-methionine is a prerequisite for activity but the enzyme has broad specificity at other positions. The chain is Peptide deformylase from Salmonella arizonae (strain ATCC BAA-731 / CDC346-86 / RSK2980).